Consider the following 314-residue polypeptide: DNA-directed RNA polymerase subunit alpha (314 aa).

Residues 1 to 228 are alpha N-terminal domain (alpha-NTD); the sequence is MAQFQIECVE…NLFIPLKDLN (228 aa). Positions 243–314 are alpha C-terminal domain (alpha-CTD); that stretch reads PESQIPIEEL…ITLPHEKAKA (72 aa).

The protein belongs to the RNA polymerase alpha chain family. In terms of assembly, homodimer. In cyanobacteria the RNAP catalytic core is composed of 2 alpha, 1 beta, 1 beta', 1 gamma and 1 omega subunit. When a sigma factor is associated with the core the holoenzyme is formed, which can initiate transcription.

The catalysed reaction is RNA(n) + a ribonucleoside 5'-triphosphate = RNA(n+1) + diphosphate. DNA-dependent RNA polymerase catalyzes the transcription of DNA into RNA using the four ribonucleoside triphosphates as substrates. The polypeptide is DNA-directed RNA polymerase subunit alpha (Synechocystis sp. (strain ATCC 27184 / PCC 6803 / Kazusa)).